The sequence spans 443 residues: ATP-dependent protease ATPase subunit HslU (443 aa).

Residues isoleucine 19 and glycine 61–glutamate 66 contribute to the ATP site. The disordered stretch occupies residues proline 139–valine 158. Positions 256, 321, and 393 each coordinate ATP.

This sequence belongs to the ClpX chaperone family. HslU subfamily. As to quaternary structure, a double ring-shaped homohexamer of HslV is capped on each side by a ring-shaped HslU homohexamer. The assembly of the HslU/HslV complex is dependent on binding of ATP.

It is found in the cytoplasm. Its function is as follows. ATPase subunit of a proteasome-like degradation complex; this subunit has chaperone activity. The binding of ATP and its subsequent hydrolysis by HslU are essential for unfolding of protein substrates subsequently hydrolyzed by HslV. HslU recognizes the N-terminal part of its protein substrates and unfolds these before they are guided to HslV for hydrolysis. The polypeptide is ATP-dependent protease ATPase subunit HslU (Cupriavidus taiwanensis (strain DSM 17343 / BCRC 17206 / CCUG 44338 / CIP 107171 / LMG 19424 / R1) (Ralstonia taiwanensis (strain LMG 19424))).